The sequence spans 465 residues: MATIHRLPSLVFLVLLALGVCSARRALLTLDAGYGLGHGTGGGYGGAAGSYGGGGGGGSGGGGGYAGEHGVVGYGGGSGGGQGGGVGYGGDQGAGYGGGGGSGGGGGVAYGGGGERGGYGGGQGGGAGGGYGAGGEHGIGYGGGGGSGAGGGGGYNAGGAQGGGYGTGGGAGGGGGGGGDHGGGYGGGQGAGGGAGGGYGGGGEHGGGGGGGQGGGAGGGYGAGGEHGGGAGGGQGGGAGGGYGAGGEHGGGAGGGQGGGAGGGYGAGGEHGGGAGGGQGGGAGGGYGAGGEHGGGAGGGQGGGAGGGYGAGGEHGGGGGGGQGGGAGGGYAAVGEHGGGYGGGQGGGDGGGYGTGGEHGGGYGGGQGGGAGGGYGTGGEHGGGYGGGQGGGGGYGAGGDHGAAGYGGGEGGGGGSGGGYGDGGAHGGGYGGGAGGGGGYGAGGAHGGGYGGGGGIGGGHGGNVP.

The first 30 residues, 1–30, serve as a signal peptide directing secretion; that stretch reads MATIHRLPSLVFLVLLALGVCSARRALLTL. 8 repeat units span residues 205-226, 227-248, 249-270, 271-292, 293-314, 315-336, 337-358, and 359-380. The 8 X 22 AA tandem repeats of H-G-G-G-[GAY]-G-G-G-Q-G-G-G-[AD]-G-G-G-Y-[GA]-[AT]-[GV]-G-E stretch occupies residues 205–380; it reads HGGGGGGGQG…AGGGYGTGGE (176 aa).

As to expression, expressed in young hypocotyls.

Its subcellular location is the secreted. The protein localises to the cell wall. Functionally, responsible for plasticity of the cell wall. The polypeptide is Glycine-rich cell wall structural protein 1.8 (Phaseolus vulgaris (Kidney bean)).